Consider the following 254-residue polypeptide: Adenosylcobinamide-GDP ribazoletransferase (254 aa).

7 helical membrane passes run 27 to 47 (SSLY…VLFA), 50 to 70 (GMGA…GFIL), 104 to 124 (VGSF…ICLL), 131 to 151 (AYGM…LLAA), 170 to 190 (AGWP…FVLL), 194 to 214 (VVPS…VGWL), and 233 to 253 (LVEI…FSAI).

This sequence belongs to the CobS family. It depends on Mg(2+) as a cofactor.

It is found in the cell inner membrane. It carries out the reaction alpha-ribazole + adenosylcob(III)inamide-GDP = adenosylcob(III)alamin + GMP + H(+). The enzyme catalyses alpha-ribazole 5'-phosphate + adenosylcob(III)inamide-GDP = adenosylcob(III)alamin 5'-phosphate + GMP + H(+). Its pathway is cofactor biosynthesis; adenosylcobalamin biosynthesis; adenosylcobalamin from cob(II)yrinate a,c-diamide: step 7/7. Functionally, joins adenosylcobinamide-GDP and alpha-ribazole to generate adenosylcobalamin (Ado-cobalamin). Also synthesizes adenosylcobalamin 5'-phosphate from adenosylcobinamide-GDP and alpha-ribazole 5'-phosphate. This chain is Adenosylcobinamide-GDP ribazoletransferase, found in Chlorobaculum parvum (strain DSM 263 / NCIMB 8327) (Chlorobium vibrioforme subsp. thiosulfatophilum).